A 358-amino-acid polypeptide reads, in one-letter code: UPF0283 membrane protein PM0909 (358 aa).

3 helical membrane passes run 62–82, 90–110, and 213–233; these read LALT…QWLV, WIYF…VSSL, and ALEA…MFFL.

This sequence belongs to the UPF0283 family.

It is found in the cell inner membrane. In Pasteurella multocida (strain Pm70), this protein is UPF0283 membrane protein PM0909.